The primary structure comprises 406 residues: HEAT repeat-containing taxis protein OE_2401F (406 aa).

HEAT repeat units lie at residues 7-41 (LERS…NLDE), 42-78 (PEPE…VDAL), 90-127 (GATW…EDTA), 153-184 (IEQP…LGRL), 185-215 (TTEQ…LGRF), 216-252 (ETAE…NVPP), and 370-406 (VGGD…GGKT).

Interacts with chemotaxis (Che) proteins.

In terms of biological role, involved in taxis signal transduction. Essential for the ability to control the direction of flagellar rotation. May have a role between CheY and the flagellum. This chain is HEAT repeat-containing taxis protein OE_2401F, found in Halobacterium salinarum (strain ATCC 29341 / DSM 671 / R1).